The primary structure comprises 512 residues: Cytochrome P450 82C3 (512 aa).

The helical transmembrane segment at 1 to 21 (MDTSLFSLFVSILVFVFIALF) threads the bilayer. Cys451 is a heme binding site.

It belongs to the cytochrome P450 family. It depends on heme as a cofactor.

Its subcellular location is the membrane. This chain is Cytochrome P450 82C3 (CYP82C3), found in Arabidopsis thaliana (Mouse-ear cress).